A 66-amino-acid polypeptide reads, in one-letter code: Large ribosomal subunit protein bL33c (66 aa).

Belongs to the bacterial ribosomal protein bL33 family.

The protein localises to the plastid. Its subcellular location is the chloroplast. In Aethionema grandiflorum (Persian stone-cress), this protein is Large ribosomal subunit protein bL33c.